We begin with the raw amino-acid sequence, 144 residues long: Dynein light chain Tctex-type protein 2B (144 aa).

This sequence belongs to the dynein light chain Tctex-type family. Light chain of the cytoplasmic dynein complex 2, a multisubunit complex composed at least of eleven different proteins. The cytoplasmic dynein 2 complex consists of two catalytic heavy chains (HCs) and a number of non-catalytic subunits presented by intermediate chains (ICs), light intermediate chains (LICs) and light chains (LCs). Among them, a heavy chain (DYNC2H1), two intermediate chains (DYNC2I2 and DYNC2I1), a light intermediate chain (DYNC2LI1), and a light chain (DYNLT2B) are unique to the dynein-2 complex, but a subset of the light chains are also shared by dynein-1 and dynein-2 complexes. The dimer DYNLT2B-DYNLT1/DYNLT3 interacts with DYNC2I1; this interaction is crucial for retrograde trafficking of ciliary proteins.

The protein resides in the dynein axonemal particle. Functionally, acts as one of several non-catalytic accessory components of the cytoplasmic dynein 2 complex (dynein-2 complex), a motor protein complex that drives the movement of cargos along microtubules within cilia and flagella in concert with the intraflagellar transport (IFT) system. Required for proper retrograde ciliary transport. This Mus musculus (Mouse) protein is Dynein light chain Tctex-type protein 2B (Dynlt2b).